We begin with the raw amino-acid sequence, 148 residues long: MSQPPFWQQKTLAEMSDSEWESLCDGCGQCCLNKLIDEDTDEIYFTNVACDQLNIKTCQCSNYERRFELEEDCIKLTRENLVTFAWLPPTCAYRLIGEGHDLPRWHPLLTGSKAAMHGERISVRHIAVRESEVVDWQDHILNKPSWAK.

It belongs to the UPF0260 family.

In Yersinia pseudotuberculosis serotype O:3 (strain YPIII), this protein is UPF0260 protein YPK_2117.